A 388-amino-acid polypeptide reads, in one-letter code: Cobalt-precorrin-5B C(1)-methyltransferase (388 aa).

It belongs to the CbiD family.

It catalyses the reaction Co-precorrin-5B + S-adenosyl-L-methionine = Co-precorrin-6A + S-adenosyl-L-homocysteine. The protein operates within cofactor biosynthesis; adenosylcobalamin biosynthesis; cob(II)yrinate a,c-diamide from sirohydrochlorin (anaerobic route): step 6/10. Catalyzes the methylation of C-1 in cobalt-precorrin-5B to form cobalt-precorrin-6A. This Rubrobacter xylanophilus (strain DSM 9941 / JCM 11954 / NBRC 16129 / PRD-1) protein is Cobalt-precorrin-5B C(1)-methyltransferase.